Here is a 2299-residue protein sequence, read N- to C-terminus: Acetyl-CoA carboxylase dmxL1 (2299 aa).

The span at 21–39 (TSIPASVPASAPPSSSAPH) shows a compositional bias: low complexity. The segment at 21–41 (TSIPASVPASAPPSSSAPHAA) is disordered. The region spanning 75–583 (VITNVLIANN…TTGWLDELIT (509 aa)) is the Biotin carboxylation domain. The 198-residue stretch at 227-424 (QVAIDADGIV…LPAAQLQIAM (198 aa)) folds into the ATP-grasp 1 domain. 258-315 (AKEIGFPVMIKASEGGGGKGIRKCEQEEGFEALYNAASSEIPGSPIFIMKLAGNARHL) contacts ATP. Residues glutamate 381, glutamate 395, and asparagine 397 each coordinate Mg(2+). The Mn(2+) site is built by glutamate 381, glutamate 395, and asparagine 397. The region spanning 710–784 (LEQENDPTQL…EPGDVLGILT (75 aa)) is the Biotinyl-binding domain. Position 751 is an N6-biotinyllysine (lysine 751). The tract at residues 1159–1208 (DMEMSSQLSTPSTPATPPTPPYENGKQSKGVGSISDMSNLIENPDKEPTR) is disordered. Residues 1539-1887 (PTKALEWLQP…KKNTLVPIGP (349 aa)) enclose the CoA carboxyltransferase N-terminal domain. Residues 1891–2205 (PWDRDIVCSP…EEHILKRIAT (315 aa)) form the CoA carboxyltransferase C-terminal domain.

Biotin is required as a cofactor. The cofactor is Mg(2+). Mn(2+) serves as cofactor.

It carries out the reaction hydrogencarbonate + acetyl-CoA + ATP = malonyl-CoA + ADP + phosphate + H(+). The catalysed reaction is N(6)-biotinyl-L-lysyl-[protein] + hydrogencarbonate + ATP = N(6)-carboxybiotinyl-L-lysyl-[protein] + ADP + phosphate + H(+). Its pathway is secondary metabolite biosynthesis. It participates in lipid metabolism; malonyl-CoA biosynthesis; malonyl-CoA from acetyl-CoA: step 1/1. Acetyl-CoA carboxylase; part of the gene cluster that mediates the biosynthesis of the dimeric xanthones cryptosporioptides. The pathway begins with the synthesis of atrochrysone thioester by the polyketide synthase dmx-nrPKS. The atrochrysone carboxyl ACP thioesterase dmxR1 then breaks the thioester bond and releases the atrochrysone carboxylic acid from dmx-nrPKS. Atrochrysone carboxylic acid is decarboxylated by the decarboxylase dmxR15, and oxidized by the anthrone oxygenase dmxR16 to yield emodin. Emodin is then reduced to emodin hydroquinone by the oxidoreductase dmxR7. A-ring reduction by the short chain dehydrogenase dmxR18, dehydration by the scytalone dehydratase-like protein dmxR17 and probable spontaneous re-oxidation, results in overall deoxygenation to chrysophanol. Baeyer-Villiger oxidation by the Baeyer-Villiger monooxygenase (BVMO) dmxR6 then yields monodictylactone in equilibrium with monodictyphenone. In the case of the cryptosporioptides biosynthesis, monodictylactone is reduced at C-12 to an alcohol (by the short chain dehydrogenases dmxR12 or dmxR8) and hydroxylated at C-5 by dmxR9, yielding the electron-rich aromatic which could eliminate H(2)O to form the ortho-quinonemethide, followed by tautomerisation to paraquinone and complete the formal reduction to produce the 10-methylgroup. Conjugate addition of C-4a-OH to the resulting paraquinone by the monooxygenase dmxR10 then gives cyclohexadienone, which is then reduced at C-5 by the short chain dehydrogenase dmxR3 to give the dihydroxanthone. The 6,7-epoxide in the cryptosporioptides could be introduced by the cytochrome P450 monooxygenase dmxL3. The highly reducing PKS dmxL2 manufactures butyrate, which is further carboxylated by dmxL1 to form ethylmalonate. It is not yet clear whether the carboxylation occurs while the butyrate is attached to the ACP of dmxL2, but this unusual fungal metabolite could then be esterified to O-5 by the O-acetyltransferase dmxR13. Finally, dimerization performed by dmxR5 gives the observed dimers cryptosporioptides A, B and C as the final products of the pathway. The protein is Acetyl-CoA carboxylase dmxL1 of Cryptosporiopsis sp. (strain 8999).